Here is a 530-residue protein sequence, read N- to C-terminus: MLETGAIWGITGTTVTSFMFFWAIYKQYVPAHFRAYVERYFHKMIGWISYYVDIKFTEYTDEGLKRSQAYDSIRNYLASKSTALAKRLKANETKNSKSLVFSMDDHEEIEDEFEGVKVKWYSNVKVIQPQSNYGQRSSEERRHFTLSFHRRHRGMIIETYLDHVLREGKAIGLMNRERKLYTNNSSQEWYPWRSGKWSNVPFHHPATFETLAMDPEKKEGIKKDLIKFSKGKDYYKKVGKPWKRGYLLFGPPGTGKSTMIAAIANFLDYDVYDLELTTVKDNSELKKLLLDTTSKSIIVIEDIDCSLDLTGQRKKKKEEDEEEDGEEKKEGEKKPKVDDKQSKVTLSGLLNSIDGLWSACSGEKIIVFTTNFVDKLDPALIRRGRMDNHIEMSYCKFEAFKVLAKNYLEIETHDLYGEIERKLEETDMSPADVAETLMPKSDEEDADICIKRLVKTLEEEKEKARKLAEEEEKKKAEKEAKKMKKAEEAEEKKKKTEEDEKKEKVKAKEENGNVSQQNGNSIDLNKKSDS.

A helical membrane pass occupies residues Gly-5–Tyr-25. Gly-250–Ser-257 contacts ATP. Disordered regions lie at residues Gln-312–Asp-339 and Lys-463–Ser-530. 2 stretches are compositionally biased toward basic and acidic residues: residues Glu-326–Asp-339 and Lys-463–Asn-511. Positions Gly-512 to Asp-523 are enriched in polar residues.

The protein belongs to the AAA ATPase family. BCS1 subfamily. The cofactor is Mg(2+).

It localises to the membrane. It catalyses the reaction ATP + H2O = ADP + phosphate + H(+). The chain is AAA-ATPase At3g28510 from Arabidopsis thaliana (Mouse-ear cress).